A 481-amino-acid chain; its full sequence is Phenylalanine--tRNA ligase alpha subunit (481 aa).

L-phenylalanine is bound by residues Thr322, 361 to 363, and Tyr401; that span reads QLE. Glu403 serves as a coordination point for Mg(2+). Residue Phe426 coordinates L-phenylalanine.

This sequence belongs to the class-II aminoacyl-tRNA synthetase family. Phe-tRNA synthetase alpha subunit type 2 subfamily. In terms of assembly, tetramer of two alpha and two beta subunits. Mg(2+) is required as a cofactor.

The protein localises to the cytoplasm. It carries out the reaction tRNA(Phe) + L-phenylalanine + ATP = L-phenylalanyl-tRNA(Phe) + AMP + diphosphate + H(+). The sequence is that of Phenylalanine--tRNA ligase alpha subunit from Methanoculleus marisnigri (strain ATCC 35101 / DSM 1498 / JR1).